The chain runs to 1481 residues: Cystic fibrosis transmembrane conductance regulator (1481 aa).

The Cytoplasmic segment spans residues 1–77 (MQRSPLEKAS…KLINALRRCF (77 aa)). A helical membrane pass occupies residues 78 to 98 (FWRFTFYGILLYLGEVTKAVQ). Residues 81–365 (FTFYGILLYL…WAVQTWYDSL (285 aa)) form the ABC transmembrane type-1 1 domain. Topologically, residues 99–122 (PLLLGRIIASYDPDNKTERSIAIY) are extracellular. A helical membrane pass occupies residues 123–146 (LGIGLCLLFIVRTLLLHPAIFGLH). The Cytoplasmic portion of the chain corresponds to 147–195 (HIGMQMRIAMFSLIYKKTLKLSSRVLDKISIGQLVSLLSNNLNKFDEGL). The chain crosses the membrane as a helical span at residues 196-216 (ALAHFVWIAPLQVALLMGLIW). The Extracellular segment spans residues 217-222 (ELLQAS). The chain crosses the membrane as a helical span at residues 223-243 (AFCGLGFLIVLALFQAGLGRM). Over 244–298 (MMKYRDQRAGKINERLVITSEMIENIQSVKAYCWEEAMEKMIENLRQTELKLTRK) the chain is Cytoplasmic. Residues 299-319 (AAYVRYFNSSAFFFSGFFVVF) form a helical membrane-spanning segment. The Extracellular segment spans residues 320–339 (LSVLPYALIKGIILRKIFTT). The helical transmembrane segment at 340 to 358 (ISFCIVLRMAVTRQFPWAV) threads the bilayer. The Cytoplasmic segment spans residues 359-858 (QTWYDSLGAI…YLRYITLHKS (500 aa)). ATP-binding positions include Trp401, Ser434, 458–465 (GSTGAGKT), and Gln493. One can recognise an ABC transporter 1 domain in the interval 423 to 646 (NDDNNLFFSN…RPDFSSKLMG (224 aa)). Cys524 carries the S-palmitoyl cysteine lipid modification. A phosphoserine mark is found at Ser549 and Ser660. The tract at residues 654-831 (SSERRNSILT…EEINEEDLKE (178 aa)) is disordered R region. The residue at position 670 (Ser670) is a Phosphoserine; by PKA. Position 686 is a phosphoserine (Ser686). Residue Lys688 forms a Glycyl lysine isopeptide (Lys-Gly) (interchain with G-Cter in ubiquitin) linkage. 2 positions are modified to phosphoserine: Ser700 and Ser712. Thr717 bears the Phosphothreonine mark. 6 positions are modified to phosphoserine: Ser737, Ser753, Ser768, Ser790, Ser795, and Ser813. Residues 859 to 879 (LIFVLIWCLVIFLAEVAASLV) form a helical membrane-spanning segment. The ABC transmembrane type-1 2 domain maps to 859 to 1155 (LIFVLIWCLV…AVNSSIDVDS (297 aa)). Residues 880 to 918 (VLWLLRNTPFQDKGNSTYSRNNSYAVIITNTSSYYVFYI) are Extracellular-facing. N-linked (GlcNAc...) asparagine glycosylation is found at Asn894, Asn900, and Asn909. The chain crosses the membrane as a discontinuously helical span at residues 919 to 939 (YVGVADTLLALGFFRGLPLVH). At 940–990 (TLITVSKILHHKMLHSVLQAPMSTLNTLKAGGILNRFSKDIAILDDLLPLT) the chain is on the cytoplasmic side. The chain crosses the membrane as a helical span at residues 991–1011 (IFDFIQLLLIVIGAIAVVSVL). Over 1012 to 1013 (QP) the chain is Extracellular. The chain crosses the membrane as a helical span at residues 1014-1034 (YIFLATVPVIAAFVLLRAYFL). At 1035-1095 (QTSQQLKQLE…TANWFLYLST (61 aa)) the chain is on the cytoplasmic side. Residues 1096 to 1116 (LRWFQMRIEMIFVIFFIAVTF) traverse the membrane as a helical segment. At 1117-1130 (ISILTTGEGEGTVG) the chain is on the extracellular side. The chain crosses the membrane as a helical span at residues 1131 to 1151 (IILTLAMNIMSTLQWAVNSSI). Residues 1152–1481 (DVDSLMRSVS…TEEEVQETRL (330 aa)) lie on the Cytoplasmic side of the membrane. Residues 1211-1444 (MTIKDLTAKY…KSLFRQAISH (234 aa)) form the ABC transporter 2 domain. Residues Tyr1220 and 1245-1252 (GRTGSGKS) contribute to the ATP site. An interaction with GORASP2 region spans residues 1387 to 1481 (RALKQAFADC…TEEEVQETRL (95 aa)). Cys1396 is lipidated: S-palmitoyl cysteine. Ser1445 and Ser1457 each carry phosphoserine. The segment at 1453-1481 (HRNSSKYKSRPQIASLKEETEEEVQETRL) is disordered. A compositionally biased stretch (acidic residues) spans 1471–1481 (ETEEEVQETRL). The PDZ-binding motif lies at 1479–1481 (TRL).

It belongs to the ABC transporter superfamily. ABCC family. CFTR transporter (TC 3.A.1.202) subfamily. Monomer; does not require oligomerization for channel activity. May form oligomers in the membrane. Interacts with SLC26A3, SLC26A6 and NHERF1. Interacts with SHANK2. Interacts with MYO6. Interacts (via C-terminus) with GOPC (via PDZ domain); this promotes CFTR internalization and thereby decreases channel activity. Interacts with SLC4A7 through NHERF1. Found in a complex with MYO5B and RAB11A. Interacts with ANO1. Interacts with SLC26A8. Interacts with AHCYL1; the interaction increases CFTR activity. Interacts with CSE1L. The core-glycosylated form interacts with GORASP2 (via PDZ GRASP-type 1 domain) in respone to ER stress. Interacts with MARCHF2; the interaction leads to CFTR ubiqtuitination and degradation. Interacts with ADGRG2. Post-translationally, N-glycosylated. Phosphorylated; cAMP treatment promotes phosphorylation and activates the channel. Dephosphorylation decreases the ATPase activity (in vitro). Phosphorylation at PKA sites activates the channel. Phosphorylation at PKC sites enhances the response to phosphorylation by PKA. Phosphorylated by AMPK; this inhibits channel activity. In terms of processing, ubiquitinated, leading to its degradation in the lysosome. Deubiquitination by USP10 in early endosomes enhances its endocytic recycling to the cell membrane. Ubiquitinated by RNF185 during ER stress. Ubiquitinated by MARCHF2.

The protein localises to the apical cell membrane. Its subcellular location is the early endosome membrane. The protein resides in the cell membrane. It localises to the recycling endosome membrane. It is found in the endoplasmic reticulum membrane. The protein localises to the nucleus. It catalyses the reaction ATP + H2O + closed Cl(-) channel = ADP + phosphate + open Cl(-) channel.. It carries out the reaction chloride(in) = chloride(out). The catalysed reaction is hydrogencarbonate(in) = hydrogencarbonate(out). The enzyme catalyses ATP + H2O = ADP + phosphate + H(+). In terms of biological role, epithelial ion channel that plays an important role in the regulation of epithelial ion and water transport and fluid homeostasis. Mediates the transport of chloride ions across the cell membrane. Possesses an intrinsic ATPase activity and utilizes ATP to gate its channel; the passive flow of anions through the channel is gated by cycles of ATP binding and hydrolysis by the ATP-binding domains. The ion channel is also permeable to HCO(3)(-); selectivity depends on the extracellular chloride concentration. Exerts its function also by modulating the activity of other ion channels and transporters. Contributes to the regulation of the pH and the ion content of the epithelial fluid layer. Modulates the activity of the epithelial sodium channel (ENaC) complex, in part by regulating the cell surface expression of the ENaC complex. May regulate bicarbonate secretion and salvage in epithelial cells by regulating the transporter SLC4A7. Can inhibit the chloride channel activity of ANO1. Plays a role in the chloride and bicarbonate homeostasis during sperm epididymal maturation and capacitation. This is Cystic fibrosis transmembrane conductance regulator from Callithrix jacchus (White-tufted-ear marmoset).